Consider the following 156-residue polypeptide: Enhancer of split M1 protein (156 aa).

A signal peptide spans 1 to 19; the sequence is MMSQTLTLCCLALVACVYG. 2 Kazal-like domains span residues 23 to 81 and 96 to 156; these read STND…AWCS and KLEV…EEKC. Intrachain disulfides connect Cys29/Cys62, Cys33/Cys55, Cys102/Cys135, Cys106/Cys128, and Cys114/Cys156.

The chain is Enhancer of split M1 protein (Kaz-m1) from Drosophila melanogaster (Fruit fly).